A 303-amino-acid polypeptide reads, in one-letter code: Bidirectional sugar transporter SWEET14 (303 aa).

Residues 1 to 9 (MAGMSLQHP) are Extracellular-facing. Residues 10–30 (WAFAFGLLGNIISFMTYLAPL) form a helical membrane-spanning segment. One can recognise a MtN3/slv 1 domain in the interval 13 to 98 (AFGLLGNIIS…AVYLVYAPKK (86 aa)). Over 31–44 (PTFYRIYKSKSTQG) the chain is Cytoplasmic. A helical membrane pass occupies residues 45 to 65 (FQSVPYVVALFSAMLWIYYAL). Topologically, residues 66 to 72 (LKSDECL) are extracellular. The chain crosses the membrane as a helical span at residues 73–93 (LITINSAGCVIETIYIAVYLV). At 94 to 105 (YAPKKAKMFTAK) the chain is on the cytoplasmic side. Residues 106 to 126 (LLLLVNVGVFGLILLLTLLLS) form a helical membrane-spanning segment. Residues 127–133 (AGDRRIV) are Extracellular-facing. A helical transmembrane segment spans residues 134–154 (VLGWVCVGFSVSVFVAPLSII). In terms of domain architecture, MtN3/slv 2 spans 134–217 (VLGWVCVGFS…MGLYAMYRNS (84 aa)). Over 155 to 167 (RLVVRTKSVEFMP) the chain is Cytoplasmic. Residues 168–188 (FSLSFSLTISAVVWFLYGLLI) form a helical membrane-spanning segment. Residues 189 to 192 (KDKY) are Extracellular-facing. Residues 193-213 (VALPNVLGFSFGVIQMGLYAM) traverse the membrane as a helical segment. Topologically, residues 214-303 (YRNSTPKAVL…AGAGEKKVAA (90 aa)) are cytoplasmic. Positions 266 to 290 (HPVDVESPPAEAPPEEDDKAAAATA) are disordered.

Belongs to the SWEET sugar transporter family. Forms homooligomers and/or heterooligomers.

It is found in the cell membrane. Mediates both low-affinity uptake and efflux of sugar across the plasma membrane. Functionally, confers blight susceptibility. Confers TAL effector-mediated susceptibility to Xanthomonas oryzae pv. oryzae. The protein is Bidirectional sugar transporter SWEET14 (SWEET14) of Oryza sativa subsp. japonica (Rice).